A 137-amino-acid chain; its full sequence is Putative pre-16S rRNA nuclease (137 aa).

This sequence belongs to the YqgF nuclease family.

It is found in the cytoplasm. Functionally, could be a nuclease involved in processing of the 5'-end of pre-16S rRNA. This chain is Putative pre-16S rRNA nuclease, found in Actinobacillus pleuropneumoniae serotype 5b (strain L20).